The following is a 462-amino-acid chain: Asparagine--tRNA ligase (462 aa).

It belongs to the class-II aminoacyl-tRNA synthetase family. In terms of assembly, homodimer.

Its subcellular location is the cytoplasm. The enzyme catalyses tRNA(Asn) + L-asparagine + ATP = L-asparaginyl-tRNA(Asn) + AMP + diphosphate + H(+). The chain is Asparagine--tRNA ligase from Synechocystis sp. (strain ATCC 27184 / PCC 6803 / Kazusa).